The following is a 338-amino-acid chain: Peptidyl-prolyl cis-trans isomerase cyp11 (338 aa).

The PPIase cyclophilin-type domain maps to 7-172 (FFDIDVDGNR…HNVMIANCGE (166 aa)). The disordered stretch occupies residues 186–338 (ASAVSDESED…RGRFKYRPTY (153 aa)). Positions 208–218 (DDSSSDEDSEE) are enriched in acidic residues. The segment covering 223–242 (RTKKKRSRKHSKKDKKKKKR) has biased composition (basic residues). Over residues 243-309 (ESSNRKRSPE…PEKRSSERRV (67 aa)) the composition is skewed to basic and acidic residues. Residues 329-338 (RGRFKYRPTY) show a composition bias toward basic residues.

The protein belongs to the cyclophilin-type PPIase family.

It carries out the reaction [protein]-peptidylproline (omega=180) = [protein]-peptidylproline (omega=0). In terms of biological role, PPIases accelerate the folding of proteins. It catalyzes the cis-trans isomerization of proline imidic peptide bonds in oligopeptides. The sequence is that of Peptidyl-prolyl cis-trans isomerase cyp11 (cyp11) from Rhizopus delemar (strain RA 99-880 / ATCC MYA-4621 / FGSC 9543 / NRRL 43880) (Mucormycosis agent).